The following is a 316-amino-acid chain: MEGPPPSKRPCGLPPGVRLVVPAAAAASASNAATAAAAAAPAGAGAGASKPARPSAAARPAKGTPAASAATTATGADASAPPPDPGAPTWDAFAAEFDVAPSWRALLEPEIAKPYARLLLAEYRGRCLTEEVLPAREDVFAWTRLTAPEDVKVVIIGQDPYHGPGQAHGLAFSVRRGVPIPPSLANIFAAVRATYPTLPAPAHGCLEAWARRGVLLLNTTLTVRRGVPGSHAPLGWARLVRAVVQRLCETRPKLVFMLWGAHAQKACAPDPRRHKVLTFSHPSPLARTPFRTCPHFGEANAYLVQTGRAPVDWSVD.

The span at 36 to 79 (AAAAAPAGAGAGASKPARPSAAARPAKGTPAASAATTATGADAS) shows a compositional bias: low complexity. The segment at 36–91 (AAAAAPAGAGAGASKPARPSAAARPAKGTPAASAATTATGADASAPPPDPGAPTWD) is disordered. The active-site Proton acceptor is Asp159.

This sequence belongs to the uracil-DNA glycosylase (UDG) superfamily. UNG family.

Its subcellular location is the host nucleus. The enzyme catalyses Hydrolyzes single-stranded DNA or mismatched double-stranded DNA and polynucleotides, releasing free uracil.. In terms of biological role, excises uracil residues from the DNA which can arise as a result of misincorporation of dUMP residues by DNA polymerase or deamination of cytosines. Therefore may reduce deleterious uracil incorporation into the viral genome, particularly in terminally differentiated cells which lack DNA repair enzymes. In Sus scrofa (Pig), this protein is Uracil-DNA glycosylase (UL2).